A 447-amino-acid polypeptide reads, in one-letter code: Serine/threonine-protein kinase NLK2 (447 aa).

Residues 60-349 (PEPDRPIGYG…AKDALAHPYL (290 aa)) form the Protein kinase domain. Residues 66–74 (IGYGAFGVV) and Lys-89 contribute to the ATP site. Asp-186 serves as the catalytic Proton acceptor.

The protein belongs to the protein kinase superfamily. CMGC Ser/Thr protein kinase family. MAP kinase subfamily. Interacts with sox11, hmgxb4/hmg2l1, rnf138/narf, stat3.1 and mef2a. Mg(2+) serves as cofactor. In terms of tissue distribution, expressed widely in the ectoderm during early gastrula stage when neural induction is taking place. Expressed in the head region of neurula stage embryos. At the end of neurulation, expression becomes localized to the nervous system, and is restricted to the central nervous system, eye and head neural crest cells by the early tadpole stages.

The protein resides in the nucleus. It is found in the cytoplasm. The enzyme catalyses L-seryl-[protein] + ATP = O-phospho-L-seryl-[protein] + ADP + H(+). It carries out the reaction L-threonyl-[protein] + ATP = O-phospho-L-threonyl-[protein] + ADP + H(+). Activated by tyrosine and threonine phosphorylation. Functionally, negatively regulates Wnt/beta-catenin-signaling during development. Plays a role together with sox11 in neural induction during early embryogenesis. Involved in TGFbeta-mediated mesoderm induction in early embryos, acting downstream of map3k7/tak1 to phosphorylate stat3.1. Augments the rnf138/narf-directed ubiquitination and degradation of tcf/lef by enhancing the association of rnf138/narf and tcf/lef. Phosphorylates mef2a to play a role in anterior neural development, including eye formation. This Xenopus laevis (African clawed frog) protein is Serine/threonine-protein kinase NLK2 (nlk.2).